Here is a 185-residue protein sequence, read N- to C-terminus: Ribosome-recycling factor (185 aa).

Belongs to the RRF family.

Its subcellular location is the cytoplasm. Responsible for the release of ribosomes from messenger RNA at the termination of protein biosynthesis. May increase the efficiency of translation by recycling ribosomes from one round of translation to another. This Desulfosudis oleivorans (strain DSM 6200 / JCM 39069 / Hxd3) (Desulfococcus oleovorans) protein is Ribosome-recycling factor.